The primary structure comprises 392 residues: Succinyl-diaminopimelate desuccinylase (392 aa).

Residue His75 participates in Zn(2+) binding. The active site involves Asp77. Zn(2+) is bound at residue Asp108. Glu147 functions as the Proton acceptor in the catalytic mechanism. Residues Glu148, Glu176, and His365 each contribute to the Zn(2+) site.

It belongs to the peptidase M20A family. DapE subfamily. In terms of assembly, homodimer. It depends on Zn(2+) as a cofactor. Co(2+) serves as cofactor.

It carries out the reaction N-succinyl-(2S,6S)-2,6-diaminopimelate + H2O = (2S,6S)-2,6-diaminopimelate + succinate. It participates in amino-acid biosynthesis; L-lysine biosynthesis via DAP pathway; LL-2,6-diaminopimelate from (S)-tetrahydrodipicolinate (succinylase route): step 3/3. In terms of biological role, catalyzes the hydrolysis of N-succinyl-L,L-diaminopimelic acid (SDAP), forming succinate and LL-2,6-diaminopimelate (DAP), an intermediate involved in the bacterial biosynthesis of lysine and meso-diaminopimelic acid, an essential component of bacterial cell walls. This Rhodopseudomonas palustris (strain BisB18) protein is Succinyl-diaminopimelate desuccinylase.